The following is a 103-amino-acid chain: UPF0145 protein PBPRB0184 (103 aa).

This sequence belongs to the UPF0145 family.

The sequence is that of UPF0145 protein PBPRB0184 from Photobacterium profundum (strain SS9).